Consider the following 323-residue polypeptide: Melanocortin receptor 3 (323 aa).

Topologically, residues 1–37 (MNSSCCPSSSYPTLPNLSQHPAAPSASNRSGSGFCEQ) are extracellular. Residues asparagine 2, asparagine 16, and asparagine 28 are each glycosylated (N-linked (GlcNAc...) asparagine). The helical transmembrane segment at 38–63 (VFIKPEVFLALGIVSLMENILVILAV) threads the bilayer. Residues 64 to 75 (VRNGNLHSPMYF) are Cytoplasmic-facing. The helical transmembrane segment at 76-100 (FLCSLAAADMLVSLSNSLETIMIVV) threads the bilayer. The Extracellular segment spans residues 101–118 (INSDSLTLEDQFIQHMDN). Residues 119–140 (IFDSMICISLVASICNLLAIAV) traverse the membrane as a helical segment. Residues 141–160 (DRYVTIFYALRYHSIMTVRK) are Cytoplasmic-facing. The helical transmembrane segment at 161 to 181 (ALSLIVAIWVCCGICGVMFIV) threads the bilayer. Topologically, residues 182-186 (YSESK) are extracellular. Residues 187–210 (MVIVCLITMFFAMVLLMGTLYIHM) form a helical membrane-spanning segment. Residues 211 to 245 (FLFARLHVQRIAALPPADGVAPQQHSCMKGAVTIT) are Cytoplasmic-facing. Residues 246–268 (ILLGVFIFCWAPFFLHLVLIITC) traverse the membrane as a helical segment. Residues 269 to 277 (PTNPYCICY) lie on the Extracellular side of the membrane. Residues 278-301 (TAHFNTYLVLIMCNSVIDPLIYAF) traverse the membrane as a helical segment. The Cytoplasmic portion of the chain corresponds to 302-323 (RSLELRNTFKEILCGCNGMNVG). A lipid anchor (S-palmitoyl cysteine) is attached at cysteine 315.

This sequence belongs to the G-protein coupled receptor 1 family. In terms of tissue distribution, brain.

Its subcellular location is the cell membrane. In terms of biological role, receptor for MSH (alpha, beta and gamma) and ACTH. This receptor is mediated by G proteins which activate adenylate cyclase. Required for expression of anticipatory patterns of activity and wakefulness during periods of limited nutrient availability and for the normal regulation of circadian clock activity in the brain. The sequence is that of Melanocortin receptor 3 (Mc3r) from Rattus norvegicus (Rat).